Reading from the N-terminus, the 142-residue chain is Large ribosomal subunit protein uL11 (142 aa).

The protein belongs to the universal ribosomal protein uL11 family. In terms of assembly, part of the ribosomal stalk of the 50S ribosomal subunit. Interacts with L10 and the large rRNA to form the base of the stalk. L10 forms an elongated spine to which L12 dimers bind in a sequential fashion forming a multimeric L10(L12)X complex. One or more lysine residues are methylated.

Forms part of the ribosomal stalk which helps the ribosome interact with GTP-bound translation factors. The chain is Large ribosomal subunit protein uL11 from Vibrio vulnificus (strain CMCP6).